A 420-amino-acid chain; its full sequence is F420-non-reducing hydrogenase vhu subunit A (420 aa).

Residues Cys61 and Cys64 each contribute to the Ni(2+) site.

The protein belongs to the [NiFe]/[NiFeSe] hydrogenase large subunit family. The F420-non-reducing hydrogenase vhu is composed of four subunits; VhuA, VhuD, VhuG and VhuU. It depends on Ni(2+) as a cofactor.

The protein is F420-non-reducing hydrogenase vhu subunit A (vhuA) of Methanococcus voltae.